A 67-amino-acid chain; its full sequence is Medusin-H1 (67 aa).

The N-terminal stretch at 1–22 (MDFLKKSLFLVLFLGFFSLSIC) is a signal peptide. A propeptide spanning residues 23 to 48 (EEEKRETEEKENEQEDDREERREEKR) is cleaved from the precursor. The segment at 24 to 46 (EEKRETEEKENEQEDDREERREE) is disordered. Residues 31-40 (EKENEQEDDR) are compositionally biased toward acidic residues. L66 is modified (leucine amide).

The protein belongs to the frog skin active peptide (FSAP) family. Medusin subfamily. Expressed by the skin glands.

The protein resides in the secreted. Functionally, antimicrobial peptide with activity against Gram-positive bacteria (S.aureus, MIC=32 mg/L) and fungi (C.albicans, MIC=128 mg/L). Shows weak hemolytic activity. The chain is Medusin-H1 from Pithecopus hypochondrialis (Orange-legged leaf frog).